The chain runs to 361 residues: dTDP-glucose 4,6-dehydratase (361 aa).

NAD(+) is bound by residues 11–12 (FI), 32–35 (DKLT), 58–59 (DI), 80–84 (LAAES), and T99. Residue S84 participates in substrate binding. T133 provides a ligand contact to substrate. The active-site Proton donor is D134. Active-site proton acceptor residues include E135 and Y167. 167 to 171 (YSASK) lines the NAD(+) pocket. Residue N196 participates in substrate binding. N197 lines the NAD(+) pocket. Substrate is bound by residues 206 to 207 (KL), 222 to 224 (PIY), R231, N266, and 296 to 300 (DRPGH).

This sequence belongs to the NAD(P)-dependent epimerase/dehydratase family. dTDP-glucose dehydratase subfamily. As to quaternary structure, homodimer. NAD(+) is required as a cofactor.

The catalysed reaction is dTDP-alpha-D-glucose = dTDP-4-dehydro-6-deoxy-alpha-D-glucose + H2O. Its pathway is carbohydrate biosynthesis; dTDP-L-rhamnose biosynthesis. It participates in bacterial outer membrane biogenesis; LPS O-antigen biosynthesis. Its function is as follows. Catalyzes the dehydration of dTDP-D-glucose to form dTDP-6-deoxy-D-xylo-4-hexulose via a three-step process involving oxidation, dehydration and reduction. This Escherichia coli protein is dTDP-glucose 4,6-dehydratase (rfbB).